Reading from the N-terminus, the 283-residue chain is NFU1 iron-sulfur cluster scaffold homolog, mitochondrial (283 aa).

A mitochondrion-targeting transit peptide spans 1 to 65 (MSKFLSQAAI…ELRMPVACRR (65 aa)). A nifU region spans residues 182–250 (IKELLDTRIR…IPEVESVEQV (69 aa)). The [4Fe-4S] cluster site is built by cysteine 219 and cysteine 222.

It belongs to the NifU family.

It localises to the mitochondrion. Its function is as follows. Molecular scaffold for [Fe-S] cluster assembly of mitochondrial iron-sulfur proteins. The protein is NFU1 iron-sulfur cluster scaffold homolog, mitochondrial of Drosophila simulans (Fruit fly).